The primary structure comprises 845 residues: Putative DEAD-box ATP-dependent RNA helicase 29 (845 aa).

The short motif at 28 to 56 (GGFESLNLGPNVFNAIKKKGYKVPTPIQR) is the Q motif element. The Helicase ATP-binding domain occupies 59 to 232 (MPLILSGVDV…KAGLREPQLV (174 aa)). 72–79 (ARTGSGKT) contributes to the ATP binding site. Residues 180–183 (DEAD) carry the DEAD box motif. The 156-residue stretch at 256–411 (KYSALLYLVR…EVLKNMEEVM (156 aa)) folds into the Helicase C-terminal domain. The interval 675-845 (SGKIKTESGA…GGGGKRGRGR (171 aa)) is disordered. Basic and acidic residues-rich tracts occupy residues 696-716 (RWQERSHKKVSRDSGDADETT) and 738-754 (VRSEIKDLDQVRKERQQ). Residues 770–799 (GGRGGARGGRGGGARGGRGGSRDFGGGGRD) are compositionally biased toward gly residues. A compositionally biased stretch (basic and acidic residues) spans 806–817 (RGGRSGGRDFGG). Residues 828–845 (GGKRGGGRGGGGKRGRGR) show a composition bias toward basic residues.

This sequence belongs to the DEAD box helicase family. DDX54/DBP10 subfamily.

The catalysed reaction is ATP + H2O = ADP + phosphate + H(+). The chain is Putative DEAD-box ATP-dependent RNA helicase 29 (RH29) from Arabidopsis thaliana (Mouse-ear cress).